An 800-amino-acid chain; its full sequence is Small ribosomal subunit protein uS3c (800 aa).

Residues 1-118 (MGQKVHPSGF…LQVKKDILVK (118 aa)) form an S3-like 1st part region. Residues 119–664 (LQKTRQYLTN…FLDCKFEELE (546 aa)) form an intervening sequence (IVS) region. Residues 665–800 (RRKTMWVQNL…TKLVTESTGA (136 aa)) form an S3-like 2nd part region.

The protein belongs to the universal ribosomal protein uS3 family. Part of the 30S ribosomal subunit.

The protein resides in the plastid. It is found in the chloroplast. This is Small ribosomal subunit protein uS3c (rps3) from Chlamydomonas moewusii (Chlamydomonas eugametos).